Reading from the N-terminus, the 127-residue chain is Small ribosomal subunit protein uS13 (127 aa).

A disordered region spans residues 90 to 127 (KRHREGLPVNGQRTRTNARTRKGKRKTVAGRSQSTQKK). Residues 105 to 117 (TNARTRKGKRKTV) show a composition bias toward basic residues.

It belongs to the universal ribosomal protein uS13 family. As to quaternary structure, part of the 30S ribosomal subunit. Forms a loose heterodimer with protein S19. Forms two bridges to the 50S subunit in the 70S ribosome.

Located at the top of the head of the 30S subunit, it contacts several helices of the 16S rRNA. In the 70S ribosome it contacts the 23S rRNA (bridge B1a) and protein L5 of the 50S subunit (bridge B1b), connecting the 2 subunits; these bridges are implicated in subunit movement. Contacts the tRNAs in the A and P-sites. In Salinibacter ruber (strain DSM 13855 / M31), this protein is Small ribosomal subunit protein uS13.